Here is a 472-residue protein sequence, read N- to C-terminus: Methanethiol oxidase (472 aa).

Ala2 is modified (N-acetylalanine). Residues Ser111 and Ser467 each carry the phosphoserine modification.

The protein belongs to the selenium-binding protein family. Interacts with USP33. Post-translationally, the N-terminus is blocked. In terms of tissue distribution, highly expressed in liver, kidney and, to a lesser extent, lung.

It is found in the nucleus. Its subcellular location is the cytoplasm. It localises to the cytosol. The protein resides in the membrane. It catalyses the reaction methanethiol + O2 + H2O = hydrogen sulfide + formaldehyde + H2O2 + H(+). Its pathway is organosulfur degradation. Functionally, catalyzes the oxidation of methanethiol, an organosulfur compound known to be produced in substantial amounts by gut bacteria. Selenium-binding protein which may be involved in the sensing of reactive xenobiotics in the cytoplasm. May be involved in intra-Golgi protein transport. The sequence is that of Methanethiol oxidase (Selenbp1) from Mus musculus (Mouse).